Reading from the N-terminus, the 344-residue chain is Dihydroorotase (344 aa).

Zn(2+) contacts are provided by His13 and His15. Substrate is bound by residues 15–17 and Asn41; that span reads HLR. 3 residues coordinate Zn(2+): Lys98, His135, and His173. Lys98 carries the N6-carboxylysine modification. His135 contributes to the substrate binding site. Leu218 contributes to the substrate binding site. Residue Asp247 participates in Zn(2+) binding. Asp247 is an active-site residue. Substrate contacts are provided by His251 and Ala263.

Belongs to the metallo-dependent hydrolases superfamily. DHOase family. Class II DHOase subfamily. Homodimer. Zn(2+) serves as cofactor.

The catalysed reaction is (S)-dihydroorotate + H2O = N-carbamoyl-L-aspartate + H(+). It participates in pyrimidine metabolism; UMP biosynthesis via de novo pathway; (S)-dihydroorotate from bicarbonate: step 3/3. Functionally, catalyzes the reversible cyclization of carbamoyl aspartate to dihydroorotate. The protein is Dihydroorotase of Neisseria meningitidis serogroup C / serotype 2a (strain ATCC 700532 / DSM 15464 / FAM18).